We begin with the raw amino-acid sequence, 192 residues long: EF-hand protein 5 (192 aa).

The disordered stretch occupies residues M1 to Y36. EF-hand domains are found at residues A46–L80, S81–D118, T119–C154, and S155–N190. Ca(2+)-binding residues include T100, E102, D107, D132, and T136.

The protein is EF-hand protein 5 of Trypanosoma brucei brucei.